Consider the following 176-residue polypeptide: Flavodoxin 1 (176 aa).

The 162-residue stretch at 4 to 165 (TGIFFGSDTG…RVEKWVKQVS (162 aa)) folds into the Flavodoxin-like domain.

It belongs to the flavodoxin family. Requires FMN as cofactor.

Functionally, low-potential electron donor to a number of redox enzymes (Potential). Involved in the reactivation of inactive cob(II)alamin in methionine synthase. This Salmonella typhimurium (strain LT2 / SGSC1412 / ATCC 700720) protein is Flavodoxin 1 (fldA).